The primary structure comprises 337 residues: MRVYNKSRIVGQLLFVALGITFIYYLFTPSVNSNAKVQIENRGGNSYEIYDMNKITESSDPIRNKEEVLILTPIARFYPQYWKNLLELDYPRNLISLGFIVPSSKDGAKVHRELRNAINAVQKGPGDKRFADVKILIQDSDLSSGQSEAERHKFSAQKERRGKLAATRNTLLLSTLKPSTSWVLWLDSDIVETPSTLIQDLAEHNEDVLVANCFQKQGDKLTPYDFNSWVDSQTAQELASHMDRDEILLEGYAELPTYRMLMAKIYEEHKDPSTIMALDGVGTTALLVKASVHRDGALFPTFPFYHLIESEGFAKMAKRLGHGVYGLPYYLVFHHNE.

Topologically, residues 1 to 8 (MRVYNKSR) are cytoplasmic. A helical; Signal-anchor for type II membrane protein transmembrane segment spans residues 9-29 (IVGQLLFVALGITFIYYLFTP). Over 30–337 (SVNSNAKVQI…PYYLVFHHNE (308 aa)) the chain is Lumenal.

The protein belongs to the ANP1/MMN9/VAN1 family.

The protein resides in the endoplasmic reticulum membrane. It localises to the golgi apparatus membrane. Its pathway is protein modification; protein glycosylation. In terms of biological role, required for the addition of the long alpha 1,6-mannose backbone of N-linked glycans on cell wall and periplasmic proteins. This chain is Mannan polymerase complex subunit mnn9, found in Schizosaccharomyces pombe (strain 972 / ATCC 24843) (Fission yeast).